Reading from the N-terminus, the 506-residue chain is ATP synthase subunit alpha (506 aa).

An ATP-binding site is contributed by 170-177 (GDRQTGKT).

It belongs to the ATPase alpha/beta chains family. In terms of assembly, F-type ATPases have 2 components, CF(1) - the catalytic core - and CF(0) - the membrane proton channel. CF(1) has five subunits: alpha(3), beta(3), gamma(1), delta(1), epsilon(1). CF(0) has four main subunits: a(1), b(1), b'(1) and c(9-12).

It localises to the cellular thylakoid membrane. It catalyses the reaction ATP + H2O + 4 H(+)(in) = ADP + phosphate + 5 H(+)(out). In terms of biological role, produces ATP from ADP in the presence of a proton gradient across the membrane. The alpha chain is a regulatory subunit. In Synechococcus sp. (strain CC9311), this protein is ATP synthase subunit alpha.